A 240-amino-acid chain; its full sequence is 6-phosphogluconolactonase (240 aa).

Belongs to the glucosamine/galactosamine-6-phosphate isomerase family. 6-phosphogluconolactonase subfamily.

It catalyses the reaction 6-phospho-D-glucono-1,5-lactone + H2O = 6-phospho-D-gluconate + H(+). The protein operates within carbohydrate degradation; pentose phosphate pathway; D-ribulose 5-phosphate from D-glucose 6-phosphate (oxidative stage): step 2/3. In terms of biological role, hydrolysis of 6-phosphogluconolactone to 6-phosphogluconate. In Nostoc sp. (strain PCC 7120 / SAG 25.82 / UTEX 2576), this protein is 6-phosphogluconolactonase (pgl).